The chain runs to 142 residues: Large ribosomal subunit protein uL11 (142 aa).

It belongs to the universal ribosomal protein uL11 family. Part of the ribosomal stalk of the 50S ribosomal subunit. Interacts with L10 and the large rRNA to form the base of the stalk. L10 forms an elongated spine to which L12 dimers bind in a sequential fashion forming a multimeric L10(L12)X complex. Post-translationally, one or more lysine residues are methylated.

Forms part of the ribosomal stalk which helps the ribosome interact with GTP-bound translation factors. This is Large ribosomal subunit protein uL11 from Parvibaculum lavamentivorans (strain DS-1 / DSM 13023 / NCIMB 13966).